A 145-amino-acid chain; its full sequence is Photosystem I reaction center subunit XI (145 aa).

The next 3 membrane-spanning stretches (helical) occupy residues 48–68 (LEIG…LGPL), 75–95 (LLVG…ALTI), and 125–145 (IGAL…SFFA).

This sequence belongs to the PsaL family.

The protein localises to the plastid. The protein resides in the chloroplast thylakoid membrane. This chain is Photosystem I reaction center subunit XI, found in Isochrysis galbana (Marine planktonic alga).